The sequence spans 208 residues: Thymidylate kinase (208 aa).

Residue 11–18 (GIEGAGKT) coordinates ATP.

It belongs to the thymidylate kinase family.

The enzyme catalyses dTMP + ATP = dTDP + ADP. Its function is as follows. Phosphorylation of dTMP to form dTDP in both de novo and salvage pathways of dTTP synthesis. The protein is Thymidylate kinase of Hahella chejuensis (strain KCTC 2396).